Reading from the N-terminus, the 96-residue chain is Large ribosomal subunit protein bL27 (96 aa).

A propeptide spanning residues 1-9 is cleaved from the precursor; the sequence is MLNMNLQLL.

This sequence belongs to the bacterial ribosomal protein bL27 family. The N-terminus is cleaved by ribosomal processing cysteine protease Prp.

This is Large ribosomal subunit protein bL27 from Clostridioides difficile (strain 630) (Peptoclostridium difficile).